A 321-amino-acid chain; its full sequence is Glucokinase (321 aa).

ATP is bound at residue 8–13 (GDVGGT).

This sequence belongs to the bacterial glucokinase family.

It is found in the cytoplasm. The catalysed reaction is D-glucose + ATP = D-glucose 6-phosphate + ADP + H(+). The sequence is that of Glucokinase from Enterobacter sp. (strain 638).